Consider the following 614-residue polypeptide: MIQVLLVTICLAVFPYQGSSIILESGNVNDYEVMYPQKVAALPKGAVQQKYEDTMQYEFKVNGEPVVLHLEKNKGLFSEDYSETHYSPDGREITTNPPVEDHCYYHGRIQNDADSTASISACNGLKGHFKLQGEMYLIEPLKFSDSEAHAVYKYENVEKEEEAPKMCGVTQTNWESDEPIKKASKLVVTAEQQRFPRRYIKLAIVVDHGIVTKHHGNLKKIRKWIYQLVNTINNIYRSLNILVALVYLEIWSKQNKITVQSASNVTLDLFGDWRESVLLKQRSHDCAQLLTTIDFDGPTIGKAYTASMCDPKRSVGIVQDYSPINLVVAVIMTHEMGHNLGIPHDGNSCTCGGFPCIMSPMISDPPSELFSNCSKAYYQTFLTDHKPQCILNAPSKTDIVSPPVCGNELLEAGEECDCGSPENCQYQCCDAASCKLHSWVKCESGECCDQCRFRTAGTECRAAESECDIPESCTGQSADCPTDRFHRNGQPCLYNHGYCYNGKCPIMFYQCYFLFGSNATVAEDDCFNNNKKGDKYFYCRKENEKYIPCAQEDVKCGRLFCDNKKYPCHYNYSEDLDFGMVDHGTKCADGKVCSNRQCVDVNEAYKSTTVFSLI.

A signal peptide spans 1–20; sequence MIQVLLVTICLAVFPYQGSS. Positions 21–191 are excised as a propeptide; that stretch reads IILESGNVND…KASKLVVTAE (171 aa). Gln192 carries the post-translational modification Pyrrolidone carboxylic acid. The Peptidase M12B domain occupies 198–394; the sequence is RYIKLAIVVD…HKPQCILNAP (197 aa). The N-linked (GlcNAc...) asparagine glycan is linked to Asn264. 3 cysteine pairs are disulfide-bonded: Cys309–Cys389, Cys349–Cys373, and Cys351–Cys356. His334 serves as a coordination point for Zn(2+). Residue Glu335 is part of the active site. Residues His338 and His344 each coordinate Zn(2+). Asn372 carries N-linked (GlcNAc...) asparagine glycosylation. The propeptide occupies 395–398; the sequence is SKTD. Residues 402-488 form the Disintegrin domain; the sequence is PPVCGNELLE…DCPTDRFHRN (87 aa). Residues Val404, Asn407, Leu409, Glu411, Glu414, and Asp417 each coordinate Ca(2+). Intrachain disulfides connect Cys405/Cys424, Cys405/Cys434, Cys416/Cys429, Cys416/Cys434, Cys418/Cys424, Cys428/Cys451, Cys442/Cys448, Cys447/Cys473, Cys460/Cys480, Cys467/Cys492, Cys467/Cys499, Cys492/Cys504, Cys499/Cys504, Cys511/Cys526, Cys511/Cys561, Cys526/Cys568, Cys539/Cys549, Cys549/Cys556, Cys556/Cys593, Cys561/Cys568, Cys587/Cys598, and Cys593/Cys598. A D/ECD-tripeptide motif is present at residues 466–468; sequence ECD. N-linked (GlcNAc...) asparagine glycosylation occurs at Asn518. N-linked (GlcNAc...) asparagine glycosylation is present at Asn571. Residues 608–614 constitute a propeptide that is removed on maturation; that stretch reads TTVFSLI.

This sequence belongs to the venom metalloproteinase (M12B) family. P-III subfamily. P-IIIb sub-subfamily. In terms of assembly, monomer. The cofactor is Zn(2+). In terms of tissue distribution, expressed by the venom gland.

The protein resides in the secreted. Zinc protease that induces hemorrhage. Has preference for Tyr, Leu, Arg, Met, and Phe at the P1 position, in descending order (in vitro). Shows equal preference for the sequences of Ala-Asp and Arg-Ile at the P3-P2 position with different enzyme cleavage sites across the P1 position: the N-terminus side for Ala-Asp and the C-terminus side for Arg-Ile. Functionally, inhibits platelet aggregation induced by ADP, thrombin, platelet-activating factor and collagen. Acts by inhibiting fibrinogen interaction with platelet receptors alpha-IIb/beta-3 (ITGA2B/ITGB3). The sequence is that of Zinc metalloproteinase-disintegrin-like HR1b from Protobothrops flavoviridis (Habu).